A 175-amino-acid chain; its full sequence is Shikimate kinase (175 aa).

11–16 is a binding site for ATP; the sequence is GAGKTT. Thr15 is a Mg(2+) binding site. Substrate is bound by residues Asp33, Arg57, and Gly79. Arg118 contributes to the ATP binding site. Arg140 lines the substrate pocket.

Belongs to the shikimate kinase family. In terms of assembly, monomer. Mg(2+) is required as a cofactor.

It localises to the cytoplasm. It carries out the reaction shikimate + ATP = 3-phosphoshikimate + ADP + H(+). It participates in metabolic intermediate biosynthesis; chorismate biosynthesis; chorismate from D-erythrose 4-phosphate and phosphoenolpyruvate: step 5/7. Functionally, catalyzes the specific phosphorylation of the 3-hydroxyl group of shikimic acid using ATP as a cosubstrate. This chain is Shikimate kinase, found in Bacteroides thetaiotaomicron (strain ATCC 29148 / DSM 2079 / JCM 5827 / CCUG 10774 / NCTC 10582 / VPI-5482 / E50).